We begin with the raw amino-acid sequence, 673 residues long: MQSPYIYPQEFDVIVVGGGHAGTEAALASARMGCKTLLLSHNIETLGQMSCNPSIGGIGKGHLVKEVDAMGGAMALATDEGGIQFRILNSSKGPAVRATRAQADRILYKAAIRRRLENQPNLWLFQQAVDDLMVEGDRVVGAVTQVGIRFRSRTVVLTAGTFLDGKIHVGLNNYAAGRAGDPPAVSLSSRLKELKLPQGRLKTGTPPRIDGRTIDFSKCIEQPGDGMPGGTAGPVPVFSFMGGAIPHPQQMPCWITHTNERTHEIIRSGFDRSPMFTGKIDGVGPRYCPSVEDKINRFADKESHQIFLEPEGLTTHEIYPNGISTSLPFDIQYELVRSMAGMENAHILRPGYAIEYDYFDPRALKTTFETRAIGGLFFAGQINGTTGYEEAAAQGMFAGINAALQCRALGGLPNDHGGAWLPRRDEAYLGVLVDDLITKGVTEPYRMFTSRAEYRLMLREDNADMRLTEKGRELGLVDDARWDAFSRKRDAVSRETERLRSLWVNPHNLPLAEAERVLGKSIEREYNLLDLLRRPDVNYAGLMSLEEGKYANPELAAEAAASDDLAKSVIEQIEITAKYAGYIDLQKTEVERAAHYENLKLPTDLDYLQVSALSFEARQTLARHRPETLGMASRISGITPATVSLLLVHLKKNLWKNTVPLKTTDTSTEKAQA.

Gly-17–Gly-22 serves as a coordination point for FAD. Gly-284–Phe-298 contacts NAD(+).

It belongs to the MnmG family. In terms of assembly, homodimer. Heterotetramer of two MnmE and two MnmG subunits. It depends on FAD as a cofactor.

It is found in the cytoplasm. In terms of biological role, NAD-binding protein involved in the addition of a carboxymethylaminomethyl (cmnm) group at the wobble position (U34) of certain tRNAs, forming tRNA-cmnm(5)s(2)U34. In Polaromonas sp. (strain JS666 / ATCC BAA-500), this protein is tRNA uridine 5-carboxymethylaminomethyl modification enzyme MnmG.